A 246-amino-acid chain; its full sequence is UDP-2,3-diacylglucosamine hydrolase (246 aa).

5 residues coordinate Mn(2+): Asp-8, His-10, Asp-41, Asn-79, and His-114. 79–80 (NR) provides a ligand contact to substrate. Positions 122, 160, 164, 167, and 195 each coordinate substrate. 2 residues coordinate Mn(2+): His-195 and His-197.

It belongs to the LpxH family. Mn(2+) serves as cofactor.

It localises to the cell inner membrane. It carries out the reaction UDP-2-N,3-O-bis[(3R)-3-hydroxytetradecanoyl]-alpha-D-glucosamine + H2O = 2-N,3-O-bis[(3R)-3-hydroxytetradecanoyl]-alpha-D-glucosaminyl 1-phosphate + UMP + 2 H(+). It functions in the pathway glycolipid biosynthesis; lipid IV(A) biosynthesis; lipid IV(A) from (3R)-3-hydroxytetradecanoyl-[acyl-carrier-protein] and UDP-N-acetyl-alpha-D-glucosamine: step 4/6. Functionally, hydrolyzes the pyrophosphate bond of UDP-2,3-diacylglucosamine to yield 2,3-diacylglucosamine 1-phosphate (lipid X) and UMP by catalyzing the attack of water at the alpha-P atom. Involved in the biosynthesis of lipid A, a phosphorylated glycolipid that anchors the lipopolysaccharide to the outer membrane of the cell. The protein is UDP-2,3-diacylglucosamine hydrolase of Chromohalobacter salexigens (strain ATCC BAA-138 / DSM 3043 / CIP 106854 / NCIMB 13768 / 1H11).